The primary structure comprises 122 residues: Large ribosomal subunit protein uL14c (122 aa).

This sequence belongs to the universal ribosomal protein uL14 family. In terms of assembly, part of the 50S ribosomal subunit.

Its subcellular location is the plastid. It is found in the chloroplast. In terms of biological role, binds to 23S rRNA. The chain is Large ribosomal subunit protein uL14c from Psilotum nudum (Whisk fern).